The sequence spans 304 residues: Nucleotide-binding protein ROP_69550 (304 aa).

Gly-24 to Gln-31 is an ATP binding site. Asp-75 to Ser-78 contributes to the GTP binding site.

Belongs to the RapZ-like family.

In terms of biological role, displays ATPase and GTPase activities. This is Nucleotide-binding protein ROP_69550 from Rhodococcus opacus (strain B4).